A 112-amino-acid chain; its full sequence is MAAPGDGADLEASLLSFEKLDRASPDLWPEQLPGVAEFAASFKSPITSSPPKWMAELENDDIDMLKELGSLTTANLMEKVRGLQNLAYQLGLDESREMTRGKFLNILEKPKK.

This sequence belongs to the lin-52 family. Component of the DREAM complex.

In Gallus gallus (Chicken), this protein is Protein lin-52 homolog (LIN52).